The following is a 389-amino-acid chain: Phospho-N-acetylmuramoyl-pentapeptide-transferase (389 aa).

10 helical membrane passes run 25–45 (RAVM…PWVI), 73–93 (TMGG…WGDL), 97–117 (FIWI…VDDY), 135–155 (FWQS…VSEA), 190–210 (ISYP…IVGA), 222–242 (GLVI…AYVM), 258–278 (GAGE…AFLW), 286–306 (VFMG…VAVI), 311–331 (IVLF…MLQV), and 366–386 (QVVV…LSTL).

It belongs to the glycosyltransferase 4 family. MraY subfamily. It depends on Mg(2+) as a cofactor.

The protein localises to the cell inner membrane. It catalyses the reaction UDP-N-acetyl-alpha-D-muramoyl-L-alanyl-gamma-D-glutamyl-meso-2,6-diaminopimeloyl-D-alanyl-D-alanine + di-trans,octa-cis-undecaprenyl phosphate = di-trans,octa-cis-undecaprenyl diphospho-N-acetyl-alpha-D-muramoyl-L-alanyl-D-glutamyl-meso-2,6-diaminopimeloyl-D-alanyl-D-alanine + UMP. The protein operates within cell wall biogenesis; peptidoglycan biosynthesis. Its function is as follows. Catalyzes the initial step of the lipid cycle reactions in the biosynthesis of the cell wall peptidoglycan: transfers peptidoglycan precursor phospho-MurNAc-pentapeptide from UDP-MurNAc-pentapeptide onto the lipid carrier undecaprenyl phosphate, yielding undecaprenyl-pyrophosphoryl-MurNAc-pentapeptide, known as lipid I. The chain is Phospho-N-acetylmuramoyl-pentapeptide-transferase from Burkholderia ambifaria (strain ATCC BAA-244 / DSM 16087 / CCUG 44356 / LMG 19182 / AMMD) (Burkholderia cepacia (strain AMMD)).